The following is a 364-amino-acid chain: MKKYKIAVLKGDGIGPEIVEQALRVLDKIGEIYGVEFEYREGLIGGEAIDKTGDPLPEETLKICKESDAILLGAVGGPKWDNLPTDKRPEKGLLRIRKELDLYANLRPAKVWDALISSSPLKEEVVKGTDMIVIRELTSGIYYGEPRGIFEENGKRYAINTMKYTEDEIRRIVRKGFEIARKRRKKLTSVDKANVLEVSALWRQIVEEEKENYPDVELEHLYIDNCAMQLVRRPTSFDVIVTGNIFGDILSDEAGVVVGSLGMLPSASIGDRYALYEPVHGSAPDIAGKGIANPIATILSAAMMLKYSFNMDKAHDLIEKAIEETLNQGYRTPDIYSEGCIKVGTKEITDKILENLERLKDAYT.

77 to 90 (GPKWDNLPTDKRPE) contacts NAD(+). Arg97, Arg107, Arg135, and Asp224 together coordinate substrate. Positions 224, 248, and 252 each coordinate Mg(2+). Residue 281–293 (GSAPDIAGKGIAN) coordinates NAD(+).

Belongs to the isocitrate and isopropylmalate dehydrogenases family. LeuB type 1 subfamily. As to quaternary structure, homodimer. Mg(2+) serves as cofactor. It depends on Mn(2+) as a cofactor.

It is found in the cytoplasm. The catalysed reaction is (2R,3S)-3-isopropylmalate + NAD(+) = 4-methyl-2-oxopentanoate + CO2 + NADH. Its pathway is amino-acid biosynthesis; L-leucine biosynthesis; L-leucine from 3-methyl-2-oxobutanoate: step 3/4. Functionally, catalyzes the oxidation of 3-carboxy-2-hydroxy-4-methylpentanoate (3-isopropylmalate) to 3-carboxy-4-methyl-2-oxopentanoate. The product decarboxylates to 4-methyl-2 oxopentanoate. This is 3-isopropylmalate dehydrogenase (leuB) from Aquifex aeolicus (strain VF5).